The sequence spans 297 residues: Protoheme IX farnesyltransferase (297 aa).

A run of 9 helical transmembrane segments spans residues 23–43 (VTQLAVFCAVIGMFLAAPGMP), 49–69 (VFGTLGIWLLAAAAFAINCLI), 93–113 (IQVLSLSGLLGGAGMLVLYHL), 117–137 (LTMWLTFATFVGYAIIYTVIL), 144–164 (NIVIGGLSGAMPPALGWAAVA), 171–191 (AWVLVLIIFIWTPPHFWALAL), 215–235 (RLHILLYSFALLATTLLPYAI), 238–258 (SGALYLASALALGGMFVWYAW), and 275–295 (FSILYLALLFGALLIDHWVGL).

The protein belongs to the UbiA prenyltransferase family. Protoheme IX farnesyltransferase subfamily.

Its subcellular location is the cell inner membrane. The catalysed reaction is heme b + (2E,6E)-farnesyl diphosphate + H2O = Fe(II)-heme o + diphosphate. It functions in the pathway porphyrin-containing compound metabolism; heme O biosynthesis; heme O from protoheme: step 1/1. In terms of biological role, converts heme B (protoheme IX) to heme O by substitution of the vinyl group on carbon 2 of heme B porphyrin ring with a hydroxyethyl farnesyl side group. The sequence is that of Protoheme IX farnesyltransferase from Bordetella pertussis (strain Tohama I / ATCC BAA-589 / NCTC 13251).